A 274-amino-acid chain; its full sequence is Thiamine kinase (274 aa).

It belongs to the thiamine kinase family.

The catalysed reaction is thiamine + ATP = thiamine phosphate + ADP + H(+). It participates in cofactor biosynthesis; thiamine diphosphate biosynthesis; thiamine phosphate from thiamine: step 1/1. Functionally, catalyzes the ATP-dependent phosphorylation of thiamine to thiamine phosphate. Is involved in thiamine salvage. The sequence is that of Thiamine kinase from Escherichia coli O45:K1 (strain S88 / ExPEC).